The chain runs to 230 residues: Cytochrome c oxidase subunit 2 (230 aa).

The Mitochondrial intermembrane segment spans residues 1-14 (MAHPTQLGFQDAAS). The helical transmembrane segment at 15-45 (PVMEELLHFHDHALMIVFLISALVLYVIITT) threads the bilayer. Residues 46 to 59 (VSTKLTNMYILDSQ) are Mitochondrial matrix-facing. Residues 60 to 87 (EIEIVWTVLPALILILIALPSLRILYLM) form a helical membrane-spanning segment. Over 88 to 230 (DEINDPHLTI…NWSTLMLKDA (143 aa)) the chain is Mitochondrial intermembrane. Cu cation-binding residues include histidine 161, cysteine 196, glutamate 198, cysteine 200, histidine 204, and methionine 207. Glutamate 198 provides a ligand contact to Mg(2+).

The protein belongs to the cytochrome c oxidase subunit 2 family. Component of the cytochrome c oxidase (complex IV, CIV), a multisubunit enzyme composed of 14 subunits. The complex is composed of a catalytic core of 3 subunits MT-CO1, MT-CO2 and MT-CO3, encoded in the mitochondrial DNA, and 11 supernumerary subunits COX4I, COX5A, COX5B, COX6A, COX6B, COX6C, COX7A, COX7B, COX7C, COX8 and NDUFA4, which are encoded in the nuclear genome. The complex exists as a monomer or a dimer and forms supercomplexes (SCs) in the inner mitochondrial membrane with NADH-ubiquinone oxidoreductase (complex I, CI) and ubiquinol-cytochrome c oxidoreductase (cytochrome b-c1 complex, complex III, CIII), resulting in different assemblies (supercomplex SCI(1)III(2)IV(1) and megacomplex MCI(2)III(2)IV(2)). Found in a complex with TMEM177, COA6, COX18, COX20, SCO1 and SCO2. Interacts with TMEM177 in a COX20-dependent manner. Interacts with COX20. Interacts with COX16. Cu cation serves as cofactor.

The protein localises to the mitochondrion inner membrane. It carries out the reaction 4 Fe(II)-[cytochrome c] + O2 + 8 H(+)(in) = 4 Fe(III)-[cytochrome c] + 2 H2O + 4 H(+)(out). Component of the cytochrome c oxidase, the last enzyme in the mitochondrial electron transport chain which drives oxidative phosphorylation. The respiratory chain contains 3 multisubunit complexes succinate dehydrogenase (complex II, CII), ubiquinol-cytochrome c oxidoreductase (cytochrome b-c1 complex, complex III, CIII) and cytochrome c oxidase (complex IV, CIV), that cooperate to transfer electrons derived from NADH and succinate to molecular oxygen, creating an electrochemical gradient over the inner membrane that drives transmembrane transport and the ATP synthase. Cytochrome c oxidase is the component of the respiratory chain that catalyzes the reduction of oxygen to water. Electrons originating from reduced cytochrome c in the intermembrane space (IMS) are transferred via the dinuclear copper A center (CU(A)) of subunit 2 and heme A of subunit 1 to the active site in subunit 1, a binuclear center (BNC) formed by heme A3 and copper B (CU(B)). The BNC reduces molecular oxygen to 2 water molecules using 4 electrons from cytochrome c in the IMS and 4 protons from the mitochondrial matrix. The chain is Cytochrome c oxidase subunit 2 (mt-co2) from Formosania lacustris (Oriental stream loach).